Here is a 1135-residue protein sequence, read N- to C-terminus: Envelopment polyprotein (1135 aa).

Positions 1 to 18 (MGIWKWLVMASLVWPVLT) are cleaved as a signal peptide. Topologically, residues 19-485 (LRNVYDMKIE…VPGFHGWATA (467 aa)) are lumenal. 11 disulfides stabilise this stretch: Cys-29/Cys-151, Cys-63/Cys-157, Cys-109/Cys-128, Cys-133/Cys-138, Cys-175/Cys-185, Cys-210/Cys-247, Cys-234/Cys-351, Cys-376/Cys-435, Cys-380/Cys-389, Cys-405/Cys-424, and Cys-452/Cys-475. The N-linked (GlcNAc...) asparagine; by host glycan is linked to Asn-134. Asn-235 and Asn-347 each carry an N-linked (GlcNAc...) asparagine; by host glycan. The N-linked (GlcNAc...) asparagine; by host glycan is linked to Asn-399. The chain crosses the membrane as a helical span at residues 486 to 506 (ALLVTFCFGWVLIPAITFIIL). At 507–627 (TVLKFIANIF…LNLFRYKSRC (121 aa)) the chain is on the cytoplasmic side. The binding to the ribonucleoprotein stretch occupies residues 516 to 533 (FHTSNQENRLKSVLRKIK). 2 CCHC-type zinc fingers span residues 545-565 (CDVCKYECETYKELKAHGVSC) and 570-591 (CPYCFTHCEPTEAAFQAHYKVC). 3 binding to the ribonucleoprotein regions span residues 588-605 (YKVCQVTHRFRDDLKKTV), 592-603 (QVTHRFRDDLKK), and 611-625 (TPGCYRTLNLFRYKS). Positions 611–634 (TPGCYRTLNLFRYKSRCYIFTMWI) constitute an ITAM domain. The YxxL motif lies at 615 to 618 (YRTL). The chain crosses the membrane as a helical span at residues 628-648 (YIFTMWIFLLVLESILWAASA). The Lumenal segment spans residues 649–1105 (SETPLTPVWN…EWISGIFSGN (457 aa)). Disulfide bonds link Cys-735–Cys-770, Cys-739–Cys-777, Cys-751–Cys-885, Cys-765–Cys-896, Cys-780–Cys-904, Cys-806–Cys-815, Cys-823–Cys-832, and Cys-863–Cys-867. Residues 757–777 (YQYETSWGCNPSDCPGVGTGC) form a fusion loop region. Asn-928 is a glycosylation site (N-linked (GlcNAc...) asparagine; by host). Disulfide bonds link Cys-970–Cys-1000, Cys-993–Cys-1045, Cys-1010–Cys-1015, Cys-1046–Cys-1051, and Cys-1085–Cys-1089. The chain crosses the membrane as a helical span at residues 1106–1126 (WIVLIVLCVFLLFSLVLLSIL). A binding to the ribonucleoprotein region spans residues 1122-1135 (LLSILCPVRKHKKS). Residues 1127-1135 (CPVRKHKKS) lie on the Cytoplasmic side of the membrane.

The protein belongs to the hantavirus envelope glycoprotein family. Homodimer. Homotetramer; forms heterotetrameric Gn-Gc spikes in the pre-fusion conformation. Interacts (via C-terminus) with the nucleoprotein. Interacts with host TUFM; this interaction contributes to the virus-induced degradation of mitochondria by autophagy, which leads to degradation of host MAVS and inhibition of type I interferon (IFN) responses. Interacts with host MAP1LC3B; this interaction contributes to the virus-induced degradation of mitochondria by autophagy, which leads to degradation of host MAVS and inhibition of type I interferon (IFN) responses. As to quaternary structure, homotetramer; forms heterotetrameric Gn-Gc spikes in the pre-fusion conformation. Homotrimer; forms homotrimer in the post-fusion conformation at acidic pH. Interacts (via C-terminus) with the nucleoprotein. Post-translationally, specific enzymatic cleavage in vivo yield the mature proteins Glycoprotein N and Glycoprotein C.

It localises to the virion membrane. Its subcellular location is the host cell surface. It is found in the host Golgi apparatus membrane. The protein resides in the host endoplasmic reticulum membrane. The protein localises to the host mitochondrion. In terms of biological role, forms homotetramers with glycoprotein C at the surface of the virion. Attaches the virion to host cell receptors including integrin ITGAV/ITGB3. This attachment induces virion internalization predominantly through clathrin-dependent endocytosis. May also bind to host C1QBP for virus entry into the host cell. Mediates the assembly and budding of infectious virus particles through its interaction with the nucleocapsid protein and the viral genome. May dysregulate normal immune and endothelial cell responses through an ITAM motif. Translocates to mitochondria, binds to host TUFM and recruits MAP1LC3B. These interactions induce mitochondrial autophagy and therefore destruction of host MAVS leading to inhibition of type I interferon (IFN) responses. Concomitant breakdown of glycoprotein N is apparently prevented by the nucleoprotein that may inhibit Gn-stimulated autophagosome-lysosome fusion. Interacts with the viral genomic RNA. Its function is as follows. Homodimer. Homotetramer; forms heterotetrameric Gn-Gc spikes in the pre-fusion conformation. Attaches the virion to host cell receptors including integrin ITGAV/ITGB3. This attachment induces virion internalization predominantly through clathrin-dependent endocytosis. May also bind to host C1QBP for virus entry into the host cell. Class II fusion protein that promotes fusion of viral membrane with host endosomal membrane after endocytosis of the virion. The protein is Envelopment polyprotein (GP) of Apodemus agrarius (Eurasian field mouse).